Here is a 260-residue protein sequence, read N- to C-terminus: tRNA pseudouridine synthase A (260 aa).

The active-site Nucleophile is the Asp52. Tyr110 contributes to the substrate binding site.

This sequence belongs to the tRNA pseudouridine synthase TruA family. Homodimer.

The enzyme catalyses uridine(38/39/40) in tRNA = pseudouridine(38/39/40) in tRNA. In terms of biological role, formation of pseudouridine at positions 38, 39 and 40 in the anticodon stem and loop of transfer RNAs. This Spiroplasma kunkelii protein is tRNA pseudouridine synthase A.